Reading from the N-terminus, the 373-residue chain is Glutamate 5-kinase (373 aa).

Lys-15 provides a ligand contact to ATP. Positions 55, 142, and 154 each coordinate substrate. ATP-binding positions include 174 to 175 and 216 to 222; these read TD and TGGMVTK. Residues 281–359 enclose the PUA domain; that stretch reads SGRVIVDDGA…GEIEAILGYK (79 aa).

Belongs to the glutamate 5-kinase family.

The protein resides in the cytoplasm. It carries out the reaction L-glutamate + ATP = L-glutamyl 5-phosphate + ADP. The protein operates within amino-acid biosynthesis; L-proline biosynthesis; L-glutamate 5-semialdehyde from L-glutamate: step 1/2. Its function is as follows. Catalyzes the transfer of a phosphate group to glutamate to form L-glutamate 5-phosphate. This Geobacter metallireducens (strain ATCC 53774 / DSM 7210 / GS-15) protein is Glutamate 5-kinase.